The primary structure comprises 478 residues: NADH-quinone oxidoreductase subunit N (478 aa).

13 consecutive transmembrane segments (helical) span residues S7–A27, I46–F66, A74–S94, F109–I129, F163–A183, V204–V224, A237–L257, Q273–V293, L300–N320, M328–L348, L371–F391, G405–L425, and W451–I471.

It belongs to the complex I subunit 2 family. NDH-1 is composed of 14 different subunits. Subunits NuoA, H, J, K, L, M, N constitute the membrane sector of the complex.

The protein resides in the cell inner membrane. It carries out the reaction a quinone + NADH + 5 H(+)(in) = a quinol + NAD(+) + 4 H(+)(out). In terms of biological role, NDH-1 shuttles electrons from NADH, via FMN and iron-sulfur (Fe-S) centers, to quinones in the respiratory chain. The immediate electron acceptor for the enzyme in this species is believed to be ubiquinone. Couples the redox reaction to proton translocation (for every two electrons transferred, four hydrogen ions are translocated across the cytoplasmic membrane), and thus conserves the redox energy in a proton gradient. The chain is NADH-quinone oxidoreductase subunit N from Hydrogenovibrio crunogenus (strain DSM 25203 / XCL-2) (Thiomicrospira crunogena).